We begin with the raw amino-acid sequence, 631 residues long: Phosphomethylpyrimidine synthase (631 aa).

Substrate-binding positions include Asn-239, Met-268, Tyr-297, His-333, 353–355 (SRG), 394–397 (DGLR), and Glu-433. His-437 provides a ligand contact to Zn(2+). Tyr-460 lines the substrate pocket. His-501 provides a ligand contact to Zn(2+). Residues Cys-581, Cys-584, and Cys-589 each contribute to the [4Fe-4S] cluster site.

The protein belongs to the ThiC family. In terms of assembly, homodimer. It depends on [4Fe-4S] cluster as a cofactor.

It catalyses the reaction 5-amino-1-(5-phospho-beta-D-ribosyl)imidazole + S-adenosyl-L-methionine = 4-amino-2-methyl-5-(phosphooxymethyl)pyrimidine + CO + 5'-deoxyadenosine + formate + L-methionine + 3 H(+). It functions in the pathway cofactor biosynthesis; thiamine diphosphate biosynthesis. Catalyzes the synthesis of the hydroxymethylpyrimidine phosphate (HMP-P) moiety of thiamine from aminoimidazole ribotide (AIR) in a radical S-adenosyl-L-methionine (SAM)-dependent reaction. The sequence is that of Phosphomethylpyrimidine synthase from Escherichia fergusonii (strain ATCC 35469 / DSM 13698 / CCUG 18766 / IAM 14443 / JCM 21226 / LMG 7866 / NBRC 102419 / NCTC 12128 / CDC 0568-73).